The sequence spans 147 residues: Myoglobin (147 aa).

Residues 2 to 141 (ADFDMVLKCW…IIADMEADYK (140 aa)) enclose the Globin domain. Histidine 60 contributes to the nitrite binding site. An O2-binding site is contributed by histidine 60. Residue histidine 89 participates in heme b binding.

It belongs to the globin family. Monomeric.

It is found in the cytoplasm. Its subcellular location is the sarcoplasm. The enzyme catalyses Fe(III)-heme b-[protein] + nitric oxide + H2O = Fe(II)-heme b-[protein] + nitrite + 2 H(+). It carries out the reaction H2O2 + AH2 = A + 2 H2O. Functionally, monomeric heme protein which primary function is to store oxygen and facilitate its diffusion within muscle tissues. Reversibly binds oxygen through a pentacoordinated heme iron and enables its timely and efficient release as needed during periods of heightened demand. Depending on the oxidative conditions of tissues and cells, and in addition to its ability to bind oxygen, it also has a nitrite reductase activity whereby it regulates the production of bioactive nitric oxide. Under stress conditions, like hypoxia and anoxia, it also protects cells against reactive oxygen species thanks to its pseudoperoxidase activity. This is Myoglobin (mb) from Pseudochaenichthys georgianus (South Georgia icefish).